The chain runs to 205 residues: Phosphoenolpyruvate guanylyltransferase (205 aa).

Residues threonine 137, glycine 153, and serine 156 each contribute to the phosphoenolpyruvate site.

This sequence belongs to the CofC family.

The enzyme catalyses phosphoenolpyruvate + GTP + H(+) = enolpyruvoyl-2-diphospho-5'-guanosine + diphosphate. The protein operates within cofactor biosynthesis; coenzyme F420 biosynthesis. Functionally, guanylyltransferase that catalyzes the activation of phosphoenolpyruvate (PEP) as enolpyruvoyl-2-diphospho-5'-guanosine, via the condensation of PEP with GTP. It is involved in the biosynthesis of coenzyme F420, a hydride carrier cofactor. The protein is Phosphoenolpyruvate guanylyltransferase of Rubrobacter xylanophilus (strain DSM 9941 / JCM 11954 / NBRC 16129 / PRD-1).